Reading from the N-terminus, the 101-residue chain is Urease subunit beta (101 aa).

Belongs to the urease beta subunit family. As to quaternary structure, heterotrimer of UreA (gamma), UreB (beta) and UreC (alpha) subunits. Three heterotrimers associate to form the active enzyme.

The protein resides in the cytoplasm. It carries out the reaction urea + 2 H2O + H(+) = hydrogencarbonate + 2 NH4(+). The protein operates within nitrogen metabolism; urea degradation; CO(2) and NH(3) from urea (urease route): step 1/1. The chain is Urease subunit beta from Stutzerimonas stutzeri (strain A1501) (Pseudomonas stutzeri).